The chain runs to 231 residues: 7-cyano-7-deazaguanine synthase (231 aa).

8–18 (FSGGQDSTTCL) is an ATP binding site. Positions 188, 197, 200, and 203 each coordinate Zn(2+).

Belongs to the QueC family. Zn(2+) serves as cofactor.

It carries out the reaction 7-carboxy-7-deazaguanine + NH4(+) + ATP = 7-cyano-7-deazaguanine + ADP + phosphate + H2O + H(+). It functions in the pathway purine metabolism; 7-cyano-7-deazaguanine biosynthesis. Functionally, catalyzes the ATP-dependent conversion of 7-carboxy-7-deazaguanine (CDG) to 7-cyano-7-deazaguanine (preQ(0)). The polypeptide is 7-cyano-7-deazaguanine synthase (Salmonella newport (strain SL254)).